A 163-amino-acid chain; its full sequence is Ubiquitin-like protein 1-ribosomal protein eS31 fusion protein (163 aa).

Residues 1 to 70 (MVFVKTLHRT…IYVNLELLGG (70 aa)) enclose the Ubiquitin-like domain. Residue Gly-70 forms a Glycyl lysine isopeptide (Gly-Lys) (interchain with K-? in acceptor proteins) linkage. The segment at 115-138 (CQQPSCGGGVFMAQHANRHYCGRC) adopts a C4-type zinc-finger fold.

It in the N-terminal section; belongs to the ubiquitin family. In the C-terminal section; belongs to the eukaryotic ribosomal protein eS31 family.

This is Ubiquitin-like protein 1-ribosomal protein eS31 fusion protein from Caenorhabditis elegans.